The chain runs to 293 residues: 33 kDa chaperonin (293 aa).

Cystine bridges form between Cys-230–Cys-232 and Cys-263–Cys-266.

The protein belongs to the HSP33 family. In terms of processing, under oxidizing conditions two disulfide bonds are formed involving the reactive cysteines. Under reducing conditions zinc is bound to the reactive cysteines and the protein is inactive.

The protein localises to the cytoplasm. In terms of biological role, redox regulated molecular chaperone. Protects both thermally unfolding and oxidatively damaged proteins from irreversible aggregation. Plays an important role in the bacterial defense system toward oxidative stress. The chain is 33 kDa chaperonin from Edwardsiella ictaluri (strain 93-146).